Consider the following 419-residue polypeptide: Probable pectate lyase C (419 aa).

A signal peptide spans 1–19 (MRLTPSLISCLSLLHFTSA). Asn-48, Asn-164, and Asn-201 each carry an N-linked (GlcNAc...) asparagine glycan. The active site involves Arg-204. The EF-hand domain occupies 261 to 296 (NENFHAYVETNYYDSDKDGTLNGSELGVDSTNYGGM). Ca(2+)-binding residues include Asp-274, Asp-276, Asp-278, and Thr-280. Asn-282 is a glycosylation site (N-linked (GlcNAc...) asparagine). Residue Glu-285 coordinates Ca(2+). A disordered region spans residues 350 to 395 (ALISDEADMGGAGDLDQGTTPTDTDGDGIPDDAEAELGTDPNTADS). A compositionally biased stretch (low complexity) spans 363–372 (DLDQGTTPTD). Acidic residues predominate over residues 373–386 (TDGDGIPDDAEAEL).

Belongs to the polysaccharide lyase 1 family. It depends on Ca(2+) as a cofactor.

It localises to the secreted. It catalyses the reaction Eliminative cleavage of (1-&gt;4)-alpha-D-galacturonan to give oligosaccharides with 4-deoxy-alpha-D-galact-4-enuronosyl groups at their non-reducing ends.. Its function is as follows. Pectinolytic enzyme consist of four classes of enzymes: pectin lyase, polygalacturonase, pectin methylesterase and rhamnogalacturonase. Among pectinolytic enzymes, pectin lyase is the most important in depolymerization of pectin, since it cleaves internal glycosidic bonds of highly methylated pectins. Favors pectate, the anion, over pectin, the methyl ester. The chain is Probable pectate lyase C (plyC) from Aspergillus flavus (strain ATCC 200026 / FGSC A1120 / IAM 13836 / NRRL 3357 / JCM 12722 / SRRC 167).